We begin with the raw amino-acid sequence, 298 residues long: MVTRRALHFVFKVGNRFQTVHFFRDVLGMQVLRHEEFEEGCKAACNGPYDGKWSKTMVGFGPEDDHFVAELTYNYGIGDYKLGNDFMGLTLASSQAVSNARRLEWPLSKVAEGVFETEAPGGYKFYLQDRSPSQSDPVLKVTLAVSDLQKSLNYWSNLLGMKIYEQDEEKKWALLGYADDQCKLELQGIQGAVDHSAAFGRIAFSCPQKELPDLEDLMKRESQSILTPLVSLDTPGKATVQVVILADPDGHEICFVGDEAFRELSKMDPKGSKLLDDAMAADKSDEWFATRNKPKASG.

The region spanning 5-130 (RALHFVFKVG…GGYKFYLQDR (126 aa)) is the VOC 1 domain. Lys-109 carries the post-translational modification N6-succinyllysine. Residue Ser-131 is modified to Phosphoserine. A VOC 2 domain is found at 137–258 (PVLKVTLAVS…DGHEICFVGD (122 aa)). Lys-273 is subject to N6-succinyllysine.

The protein belongs to the glyoxalase I family. In terms of assembly, interacts with NUDT9.

It localises to the mitochondrion. This Rattus norvegicus (Rat) protein is Glyoxalase domain-containing protein 4 (Glod4).